The primary structure comprises 930 residues: MESMLNKLKSTVTKVTADVTSAVMGNPVTREFDVGRHIASGGNGLAWKIFNGTKKSTKQEVAVFVFDKKLIDKYQKFEKDQIIDSLKRGVQQLTRLRHPRLLTVQHPLEESRDCLAFCTEPVFASLANVLGNWENLPSSISPDIKDYKLYDVETKYGLLQVSEGLSFLHSSVKMVHGNVTPENVILNKSGAWKIMGFDFCVSSSNPSEQEPKFPCKEWDPNLPSLCLPNPEYLAPEYILSVSCETASDMYSLGAVMYAVFNQGRPIFEVNKQDIYKSFSRQLDQLSRLGSSSLTSIPEEVREHVKLLLNVTPTVRPDADQMTKIPFFDDVGAVTLQYFDTLFQRDNLQKSQFFKGLPKVLPKLPKRVIVQRILPCLTSEFVNPDMVPFVLPNVLLIAEECTKEEYIKLILPELGPVFKQQEPIQILLIFLQKMDLLLTKTPPDEIKNSVLPMVYRALEAPSIQIQELCLNIIPTFANLIDYPSMKNALIPRIKNACLQTSSLAVRVNSLVCLGKILEYLDKWFVLDDILPFLQQIPSKEPAVLMGILGIYKCTFTHKKLGITKEQLAGKVLPHLIPLSIENNLNLNQFSSFIAVIKEMLSRLESEHRTKLEQLHVMQEQQRSLDIGNQMSTSEETKVAHSGSQQIDKVFNNIGADLLSGSESENREDGMQGKQKRGSLTLEEKQKLAKEQEQAQKLKSQQPLKPQVHTPIAPIKQTKDLTDTLMENMSSLTSLSVSTPKISASSTFTPVPSTGLGMMFSTPIDNTKRNLTNGLNANMGFQTSGFSMPVNPNQNFFSGTGTAGVTTMSLGAPPTMSNFSPLTIPPASVKQPQQRPTDMSALNNLFGPQKPKVSMNQLSQQKPNQWLNQFAPPQGSPVMGSAAMGTQGNVMGQAAFGMQGNPFFNPQNFAQPPPTTMTSSSSASNDLKDLFG.

The Protein kinase domain maps to 32 to 327; the sequence is FDVGRHIASG…ADQMTKIPFF (296 aa). The stretch at 443-479 is one HEAT repeat; the sequence is DEIKNSVLPMVYRALEAPSIQIQELCLNIIPTFANLI. A phosphoserine mark is found at serine 658 and serine 677. The disordered stretch occupies residues 658-706; it reads SGSESENREDGMQGKQKRGSLTLEEKQKLAKEQEQAQKLKSQQPLKPQV. Positions 680 to 694 are enriched in basic and acidic residues; it reads LEEKQKLAKEQEQAQ. The span at 695–705 shows a compositional bias: low complexity; the sequence is KLKSQQPLKPQ. Position 708 is a phosphothreonine (threonine 708). The tract at residues 895 to 930 is disordered; the sequence is GMQGNPFFNPQNFAQPPPTTMTSSSSASNDLKDLFG. Residues 897–922 show a composition bias toward low complexity; it reads QGNPFFNPQNFAQPPPTTMTSSSSAS.

This sequence belongs to the protein kinase superfamily. Interacts with clathrin and AP2B1; the interaction mediates the association with the AP-2 complex. In terms of processing, could autophosphorylate in presence of poly-L-lysine. In terms of tissue distribution, ubiquitously expressed.

It is found in the cytoplasmic vesicle. The protein resides in the clathrin-coated vesicle. It localises to the golgi apparatus. The protein localises to the trans-Golgi network membrane. Its subcellular location is the endosome membrane. In terms of biological role, component of the AP2-containing clathrin coat that may regulate clathrin-dependent trafficking at plasma membrane, TGN and endosomal system. A possible serine/threonine-protein kinase toward the beta2-subunit of the plasma membrane adapter complex AP2 and other proteins in presence of poly-L-lysine has not been confirmed. By regulating the expression of excitatory receptors at synapses, plays an essential role in neuronal function and signaling and in brain development. The sequence is that of SCY1-like protein 2 from Mus musculus (Mouse).